The sequence spans 511 residues: uncharacterized protein (511 aa).

Helical transmembrane passes span 33-53 (IICM…LAMA), 59-79 (IPVQ…AHIS), and 97-117 (VGRF…TTSI). Ser-147, Ser-161, and Ser-162 each carry phosphoserine. The interval 157–180 (REGNSSDEYLPPQSSRRDVSSEKP) is disordered. The next 7 membrane-spanning stretches (helical) occupy residues 216-236 (LWLY…AGIF), 249-269 (IKGA…LGAF), 297-317 (MVES…EHLG), 332-352 (SLAF…SKVV), 412-432 (VLWG…YIML), 449-469 (IITS…SYDV), and 483-503 (IMNI…MFLI).

The protein to yeast YCR061W.

Its subcellular location is the endoplasmic reticulum membrane. This is an uncharacterized protein from Schizosaccharomyces pombe (strain 972 / ATCC 24843) (Fission yeast).